The primary structure comprises 97 residues: Large ribosomal subunit protein eL21 (97 aa).

Residues 1 to 26 are disordered; it reads MQKSEGFRSKTRYKLQKHPRQKGMAP. Residues 9-21 are compositionally biased toward basic residues; sequence SKTRYKLQKHPRQ.

This sequence belongs to the eukaryotic ribosomal protein eL21 family.

The sequence is that of Large ribosomal subunit protein eL21 from Methanococcus maripaludis (strain C6 / ATCC BAA-1332).